The sequence spans 258 residues: Aspartate/glutamate leucyltransferase (258 aa).

Belongs to the R-transferase family. Bpt subfamily.

It is found in the cytoplasm. It catalyses the reaction N-terminal L-glutamyl-[protein] + L-leucyl-tRNA(Leu) = N-terminal L-leucyl-L-glutamyl-[protein] + tRNA(Leu) + H(+). The enzyme catalyses N-terminal L-aspartyl-[protein] + L-leucyl-tRNA(Leu) = N-terminal L-leucyl-L-aspartyl-[protein] + tRNA(Leu) + H(+). Its function is as follows. Functions in the N-end rule pathway of protein degradation where it conjugates Leu from its aminoacyl-tRNA to the N-termini of proteins containing an N-terminal aspartate or glutamate. In Rhizobium johnstonii (strain DSM 114642 / LMG 32736 / 3841) (Rhizobium leguminosarum bv. viciae), this protein is Aspartate/glutamate leucyltransferase.